A 490-amino-acid chain; its full sequence is GTPase Der (490 aa).

EngA-type G domains lie at 3-166 (PVVA…MDDV) and 203-376 (IKLA…DSST). Residues 9–16 (GRPNVGKS), 56–60 (DTGGI), 118–121 (NKTD), 209–216 (GRPNVGKS), 256–260 (DTAGV), and 321–324 (NKWD) contribute to the GTP site. Residues 377–461 (RRVSTAMLTR…PIRIQFKEGE (85 aa)) enclose the KH-like domain.

It belongs to the TRAFAC class TrmE-Era-EngA-EngB-Septin-like GTPase superfamily. EngA (Der) GTPase family. In terms of assembly, associates with the 50S ribosomal subunit.

Its function is as follows. GTPase that plays an essential role in the late steps of ribosome biogenesis. In Salmonella choleraesuis (strain SC-B67), this protein is GTPase Der.